A 1415-amino-acid polypeptide reads, in one-letter code: Bridge-like lipid transfer protein family member 3B (1415 aa).

One can recognise a Chorein N-terminal domain in the interval Gly3–Cys94. 2 disordered regions span residues Ser267 to Pro300 and Lys882 to Val904. The span at Ala275–Pro300 shows a compositional bias: polar residues. The stretch at Lys1367 to Leu1404 forms a coiled coil.

Its subcellular location is the cytoplasm. It is found in the cytosol. The protein localises to the early endosome. In terms of biological role, tube-forming lipid transport protein which mediates the transfer of lipids between membranes at organelle contact sites. Required for retrograde traffic of vesicle clusters in the early endocytic pathway to the Golgi complex. This chain is Bridge-like lipid transfer protein family member 3B (bltp3b), found in Xenopus laevis (African clawed frog).